The chain runs to 444 residues: C4-dicarboxylate transport protein 3 (444 aa).

9 consecutive transmembrane segments (helical) span residues 22-42 (VLYV…WLWP), 60-80 (LIKM…IAHI), 95-115 (VYFE…GNLV), 162-182 (GEIL…MSLG), 198-218 (AVFG…FGAM), 236-256 (LIAT…GIIA), 321-341 (IYMT…LSFG), 346-366 (ILVV…AGFI), and 399-419 (LTNL…EGEL).

The protein belongs to the dicarboxylate/amino acid:cation symporter (DAACS) (TC 2.A.23) family.

Its subcellular location is the cell inner membrane. Responsible for the transport of dicarboxylates such as succinate, fumarate, and malate from the periplasm across the membrane. The chain is C4-dicarboxylate transport protein 3 from Bradyrhizobium diazoefficiens (strain JCM 10833 / BCRC 13528 / IAM 13628 / NBRC 14792 / USDA 110).